Consider the following 119-residue polypeptide: BLOC-1-related complex subunit 8 (119 aa).

The residue at position 109 (S109) is a Phosphoserine.

It belongs to the BORCS8 family. As to quaternary structure, component of the BLOC-one-related complex (BORC) which is composed of BLOC1S1, BLOC1S2, BORCS5, BORCS6, BORCS7, BORCS8, KXD1 and SNAPIN.

Its subcellular location is the lysosome membrane. Functionally, as part of the BLOC-one-related complex (BORC), it plays a role in the movement and localization of lysosomes at the cell periphery. Associated with the cytosolic face of lysosomes, BORC recruits ARL8B to the lysosomal membrane and couples lysosomes to microtubule plus-end-directed kinesin motors, driving lysosome movement toward the cell periphery. The chain is BLOC-1-related complex subunit 8 from Homo sapiens (Human).